Reading from the N-terminus, the 199-residue chain is Probable NADH dehydrogenase [ubiquinone] iron-sulfur protein 7, mitochondrial (199 aa).

The [4Fe-4S] cluster site is built by Cys-74, Cys-75, Cys-139, and Cys-169.

Belongs to the complex I 20 kDa subunit family. Complex I is composed of 45 different subunits This is a component of the iron-sulfur (IP) fragment of the enzyme. [4Fe-4S] cluster serves as cofactor.

It localises to the mitochondrion. The catalysed reaction is a ubiquinone + NADH + 5 H(+)(in) = a ubiquinol + NAD(+) + 4 H(+)(out). In terms of biological role, core subunit of the mitochondrial membrane respiratory chain NADH dehydrogenase (Complex I) that is believed to belong to the minimal assembly required for catalysis. Complex I functions in the transfer of electrons from NADH to the respiratory chain. The immediate electron acceptor for the enzyme is believed to be ubiquinone. The sequence is that of Probable NADH dehydrogenase [ubiquinone] iron-sulfur protein 7, mitochondrial (nduf-7) from Caenorhabditis elegans.